The following is a 401-amino-acid chain: Phosphoglycerate kinase (401 aa).

Substrate-binding positions include 21 to 23 (DFN), Arg-36, 59 to 62 (HLGR), Arg-119, and Arg-160. Residues Lys-212, Glu-330, and 357 to 360 (GGDS) contribute to the ATP site.

The protein belongs to the phosphoglycerate kinase family. In terms of assembly, monomer.

Its subcellular location is the cytoplasm. It carries out the reaction (2R)-3-phosphoglycerate + ATP = (2R)-3-phospho-glyceroyl phosphate + ADP. It functions in the pathway carbohydrate degradation; glycolysis; pyruvate from D-glyceraldehyde 3-phosphate: step 2/5. The chain is Phosphoglycerate kinase from Limosilactobacillus reuteri subsp. reuteri (strain JCM 1112) (Lactobacillus reuteri).